The sequence spans 588 residues: Synaptotagmin-3 (588 aa).

Residues 1–54 (MSGDYEDDLCRRALILVSDLCARIRDADTNDRCQEFNELRIRGYPRGPDADISV) are Vesicular-facing. The tract at residues 10–34 (CRRALILVSDLCARIRDADTNDRCQ) is cysteine motif. A helical membrane pass occupies residues 55-75 (SLLSVIVTFCGIVLLGVSLFV). Over 76–588 (SWKLCWVPWR…KGLSEKENSE (513 aa)) the chain is Cytoplasmic. 3 disordered regions span residues 129 to 161 (GGPHHHAHPAHHPPFAELLEPGGLGGSEPPEPS), 183 to 222 (PSQTSPELPSEGGTGSGLLLLPPSGGGLPSAQSHQQVTSL), and 238 to 257 (QTLTTQADPSSEERPPALPL). The span at 183–205 (PSQTSPELPSEGGTGSGLLLLPP) shows a compositional bias: low complexity. Residues 213 to 222 (AQSHQQVTSL) are compositionally biased toward polar residues. Residue arginine 286 is modified to Omega-N-methylarginine. C2 domains lie at 297-418 (PCGR…PLWR) and 429-563 (DLGE…EHWH). The Ca(2+) site is built by aspartate 328, aspartate 334, aspartate 386, phenylalanine 387, aspartate 388, serine 391, aspartate 394, aspartate 460, aspartate 466, aspartate 520, and aspartate 522.

The protein belongs to the synaptotagmin family. As to quaternary structure, homodimer; disulfide-linked via the cysteine motif. Can also form heterodimers with SYT6, SYT9 and SYT10. Ca(2+) is required as a cofactor. Brain, various endocrine tissues and hormone-secreting clonal cells.

It localises to the cell membrane. Its subcellular location is the cytoplasmic vesicle. The protein resides in the secretory vesicle membrane. In terms of biological role, ca(2+) sensor involved in Ca(2+)-dependent exocytosis of secretory vesicles through Ca(2+) and phospholipid binding to the C2 domain. Ca(2+) induces binding of the C2-domains to phospholipid membranes and to assembled SNARE-complexes; both actions contribute to triggering exocytosis. Plays a role in dendrite formation by melanocytes. In Rattus norvegicus (Rat), this protein is Synaptotagmin-3 (Syt3).